Reading from the N-terminus, the 878-residue chain is Coatomer subunit gamma (878 aa).

HEAT repeat units lie at residues 64–101 (REATDCFFAMTKLFQSKDVVLRRMVYLGIKELSSVAED), 287–324 (RMLSPAFSILQLFCSSPKATLRFAAVRTLNKVAMTHPA), 326–359 (VTTCNLDLEGLITDSNRSVATLAITTLLKTGAES), 360–396 (SVERLMKQISTFVAEISDEFKIVVVQAICALCTKYPR), 399–434 (TVLMNFLSGMLREEGGLEYKTSIVDTIITIIEENAD), and 471–508 (ATPSKYIRFIYNRVILESPIVRAAAVTALSQFGASCPA).

This sequence belongs to the COPG family. Oligomeric complex that consists of at least the alpha, beta, beta', gamma, delta, epsilon and zeta subunits.

It is found in the cytoplasm. The protein resides in the golgi apparatus membrane. The protein localises to the cytoplasmic vesicle. It localises to the COPI-coated vesicle membrane. Its subcellular location is the endoplasmic reticulum. The coatomer is a cytosolic protein complex that binds to dilysine motifs and reversibly associates with Golgi non-clathrin-coated vesicles, which further mediate biosynthetic protein transport from the ER, via the Golgi up to the trans Golgi network. Coatomer complex is required for budding from Golgi membranes, and is essential for the retrograde Golgi-to-ER transport of dilysine-tagged proteins. Required for limiting lipid storage in lipid droplets. Involved in the expansion of luminal extracellular matrices and apical membrane during tubulogenesis. Required in the tracheal epithelium for luminal protein secretion and diametric tube growth. In salivary glands, required for deposition of O-glycans and luminal extracellular matrix assembly. Required for epidermal morphogenesis and cuticle development. The polypeptide is Coatomer subunit gamma (Drosophila pseudoobscura pseudoobscura (Fruit fly)).